The primary structure comprises 95 residues: UPF0381 protein HI_0400 (95 aa).

This sequence belongs to the UPF0381 family.

This Haemophilus influenzae (strain ATCC 51907 / DSM 11121 / KW20 / Rd) protein is UPF0381 protein HI_0400.